The chain runs to 498 residues: Guanosine-5'-triphosphate,3'-diphosphate pyrophosphatase (498 aa).

It belongs to the GppA/Ppx family. GppA subfamily.

The catalysed reaction is guanosine 3'-diphosphate 5'-triphosphate + H2O = guanosine 3',5'-bis(diphosphate) + phosphate + H(+). The protein operates within purine metabolism; ppGpp biosynthesis; ppGpp from GTP: step 2/2. Functionally, catalyzes the conversion of pppGpp to ppGpp. Guanosine pentaphosphate (pppGpp) is a cytoplasmic signaling molecule which together with ppGpp controls the 'stringent response', an adaptive process that allows bacteria to respond to amino acid starvation, resulting in the coordinated regulation of numerous cellular activities. This Pectobacterium atrosepticum (strain SCRI 1043 / ATCC BAA-672) (Erwinia carotovora subsp. atroseptica) protein is Guanosine-5'-triphosphate,3'-diphosphate pyrophosphatase.